A 219-amino-acid polypeptide reads, in one-letter code: Uracil phosphoribosyltransferase 1 (219 aa).

GTP contacts are provided by residues arginine 33, arginine 42, and 76 to 79; that span reads DGRI. Arginine 86 is a 5-phospho-alpha-D-ribose 1-diphosphate binding site. Arginine 103 lines the GTP pocket. Arginine 111 lines the 5-phospho-alpha-D-ribose 1-diphosphate pocket. Arginine 132 lines the GTP pocket. Residues aspartate 138 and 138–146 each bind 5-phospho-alpha-D-ribose 1-diphosphate; that span reads DPMLATGGS. Tyrosine 202 contacts D-ribose 5-phosphate. Uracil-binding positions include isoleucine 203 and 208–210; that span reads GDF. Aspartate 209 is a 5-phospho-alpha-D-ribose 1-diphosphate binding site.

Belongs to the UPRTase family. The cofactor is Mg(2+).

It carries out the reaction UMP + diphosphate = 5-phospho-alpha-D-ribose 1-diphosphate + uracil. It participates in pyrimidine metabolism; UMP biosynthesis via salvage pathway; UMP from uracil: step 1/1. Allosterically activated by GTP. In terms of biological role, catalyzes the conversion of uracil and 5-phospho-alpha-D-ribose 1-diphosphate (PRPP) to UMP and diphosphate. In Schizosaccharomyces pombe (strain 972 / ATCC 24843) (Fission yeast), this protein is Uracil phosphoribosyltransferase 1.